We begin with the raw amino-acid sequence, 517 residues long: MSEQVALNPSEISELIRKKIDQFSVVSEARNEGTIVSLKDGIVRLHGLADVMAGEMIEFPGGVYGLALNLERDSVGAVILGDSSTLAEGQKGKCTGRILEVPVGKGLLGRVVDALGNPIDGKGPIESSGMSPIEKVAPGVITRKSVDQPVQTGLKAIDAMIPVGRGQRELIIGDRQTGKTAIAIDAIINQKGTGVKCVYVAIGQKASSVASIVRKLEEHGALEHTIVVVAGASDSAALQYIAPYSGCTMGEYFMERGEDALIVYDDLTKQAWAYRQISLLLRRPPGREAYPGDIFYLHSRLLERAARINADEVEKLTNGEVKGKTGSLTALPIIETQAGDVSAFVPTNVISITDGQIFLDVDLFNSGVRPAINSGLSVSRVGGAAQTKIMKKLGGGTRLALAQFRELEAFSQFASDLDDATRKQLERGQRITELMKQKQYSPLTVAEMGVSLFVVEKGYLDDVPVNEISSFEASLHDYMRSTHAALLHAINEAGAYDNEIEAKLKKAVEEFKNTGSW.

Residue 173–180 (GDRQTGKT) coordinates ATP.

It belongs to the ATPase alpha/beta chains family. In terms of assembly, F-type ATPases have 2 components, CF(1) - the catalytic core - and CF(0) - the membrane proton channel. CF(1) has five subunits: alpha(3), beta(3), gamma(1), delta(1), epsilon(1). CF(0) has three main subunits: a(1), b(2) and c(9-12). The alpha and beta chains form an alternating ring which encloses part of the gamma chain. CF(1) is attached to CF(0) by a central stalk formed by the gamma and epsilon chains, while a peripheral stalk is formed by the delta and b chains.

It localises to the cell inner membrane. It catalyses the reaction ATP + H2O + 4 H(+)(in) = ADP + phosphate + 5 H(+)(out). Functionally, produces ATP from ADP in the presence of a proton gradient across the membrane. The alpha chain is a regulatory subunit. The polypeptide is ATP synthase subunit alpha 2 (Legionella pneumophila subsp. pneumophila (strain Philadelphia 1 / ATCC 33152 / DSM 7513)).